The sequence spans 168 residues: Gremlin-2 (168 aa).

An N-terminal signal peptide occupies residues 1-21 (MFWKLSLSLFLVAVLVKVAEA). N-linked (GlcNAc...) asparagine glycosylation is present at Asn-40. Intrachain disulfides connect Cys-73-Cys-123, Cys-87-Cys-137, Cys-97-Cys-155, and Cys-101-Cys-157. One can recognise a CTCK domain in the interval 73 to 163 (CKTQPLRQTV…QCRCMSVNLS (91 aa)). A glycan (N-linked (GlcNAc...) asparagine) is linked at Asn-161.

This sequence belongs to the DAN family. As to quaternary structure, homodimer. Interacts with BMP2, BMP4 and BMP7, but has lower affinity for BMP7 than for BMP2 and BMP4. Binds heparin; this impairs the interaction with BMP2. N-glycosylated.

The protein localises to the secreted. Its function is as follows. Cytokine that inhibits the activity of BMP2 and BMP4 in a dose-dependent manner, and thereby modulates signaling by BMP family members. Contributes to the regulation of embryonic morphogenesis via BMP family members. Antagonizes BMP4-induced suppression of progesterone production in granulosa cells. This chain is Gremlin-2 (GREM2), found in Homo sapiens (Human).